A 1006-amino-acid chain; its full sequence is D-2-hydroxyglutarate dehydrogenase (1006 aa).

Positions 47–279 (YQRLPQAAVF…VEAKLNVLPI (233 aa)) constitute an FAD-binding PCMH-type domain. Residues Arg-397 and His-495 each contribute to the (R)-2-hydroxyglutarate site. The 4Fe-4S ferredoxin-type domain occupies 655–687 (SHEVYDAMAGCLACKSCAGQCPIKVNVPDFRSR). The [4Fe-4S] cluster site is built by Cys-665, Cys-668, Cys-671, and Cys-675.

It in the N-terminal section; belongs to the FAD-binding oxidoreductase/transferase type 4 family. [4Fe-4S] cluster is required as a cofactor. FAD serves as cofactor.

The enzyme catalyses (R)-2-hydroxyglutarate + A = 2-oxoglutarate + AH2. Its pathway is amino-acid degradation. Functionally, catalyzes the oxidation of D-2-hydroxyglutarate (D-2-HGA) to 2-oxoglutarate. Is involved in a D-lysine catabolic pathway. In Pseudomonas putida (strain ATCC 47054 / DSM 6125 / CFBP 8728 / NCIMB 11950 / KT2440), this protein is D-2-hydroxyglutarate dehydrogenase.